Here is a 215-residue protein sequence, read N- to C-terminus: Fanconi anemia core complex-associated protein 24 (215 aa).

As to quaternary structure, belongs to the multisubunit FA complex composed of FANCA, FANCB, FANCC, FANCE, FANCF, FANCG, FANCL/PHF9, FANCM and FAAP24. Interacts with FANCM.

Its subcellular location is the nucleus. In terms of biological role, plays a role in DNA repair through recruitment of the FA core complex to damaged DNA. Regulates FANCD2 monoubiquitination upon DNA damage. Induces chromosomal instability as well as hypersensitivity to DNA cross-linking agents, when repressed. Targets FANCM/FAAP24 complex to the DNA, preferentially to single strand DNA. This chain is Fanconi anemia core complex-associated protein 24, found in Bos taurus (Bovine).